Consider the following 145-residue polypeptide: Transmembrane protein 216 (145 aa).

Helical transmembrane passes span 22–42, 56–76, 89–109, and 122–142; these read ILFF…LFIF, LVLD…RLFF, LSIS…YLLL, and GILL…LAAF.

Part of the tectonic-like complex (also named B9 complex). Interacts with TMEM107.

The protein localises to the membrane. Its subcellular location is the cytoplasm. It is found in the cytoskeleton. The protein resides in the cilium basal body. Functionally, part of the tectonic-like complex which is required for tissue-specific ciliogenesis and may regulate ciliary membrane composition. This chain is Transmembrane protein 216 (TMEM216), found in Homo sapiens (Human).